The chain runs to 133 residues: Male-specific protein scotti (133 aa).

The interval 11–57 (FPSNGLGNNNNDPNQQRGERPRQPHPDLGWILDAPNEPPRNRNPLLY) is disordered. Positions 14 to 24 (NGLGNNNNDPN) are enriched in low complexity. The N-linked (GlcNAc...) asparagine glycan is linked to asparagine 83.

This sequence belongs to the male-specific scotti family.

Its function is as follows. Post-meiotically transcribed gene that has a role in late spermiogenesis; required for actin cone progression during spermatid individualization. This is Male-specific protein scotti from Drosophila persimilis (Fruit fly).